The sequence spans 638 residues: 1-deoxy-D-xylulose-5-phosphate synthase (638 aa).

Residues His78 and 119–121 (GHS) each bind thiamine diphosphate. Asp151 is a binding site for Mg(2+). Residues 152–153 (GA), Asn180, Tyr289, and Glu371 each bind thiamine diphosphate. Asn180 contacts Mg(2+).

It belongs to the transketolase family. DXPS subfamily. As to quaternary structure, homodimer. Requires Mg(2+) as cofactor. The cofactor is thiamine diphosphate.

It catalyses the reaction D-glyceraldehyde 3-phosphate + pyruvate + H(+) = 1-deoxy-D-xylulose 5-phosphate + CO2. Its pathway is metabolic intermediate biosynthesis; 1-deoxy-D-xylulose 5-phosphate biosynthesis; 1-deoxy-D-xylulose 5-phosphate from D-glyceraldehyde 3-phosphate and pyruvate: step 1/1. Functionally, catalyzes the acyloin condensation reaction between C atoms 2 and 3 of pyruvate and glyceraldehyde 3-phosphate to yield 1-deoxy-D-xylulose-5-phosphate (DXP). This is 1-deoxy-D-xylulose-5-phosphate synthase from Bartonella bacilliformis (strain ATCC 35685 / KC583 / Herrer 020/F12,63).